The primary structure comprises 271 residues: Putative phosphoenolpyruvate synthase regulatory protein (271 aa).

152–159 is a binding site for ADP; the sequence is GVSRSGKT.

The protein belongs to the pyruvate, phosphate/water dikinase regulatory protein family. PSRP subfamily.

The enzyme catalyses [pyruvate, water dikinase] + ADP = [pyruvate, water dikinase]-phosphate + AMP + H(+). The catalysed reaction is [pyruvate, water dikinase]-phosphate + phosphate + H(+) = [pyruvate, water dikinase] + diphosphate. Bifunctional serine/threonine kinase and phosphorylase involved in the regulation of the phosphoenolpyruvate synthase (PEPS) by catalyzing its phosphorylation/dephosphorylation. The polypeptide is Putative phosphoenolpyruvate synthase regulatory protein (Dichelobacter nodosus (strain VCS1703A)).